A 142-amino-acid polypeptide reads, in one-letter code: Peptide methionine sulfoxide reductase MsrB (142 aa).

One can recognise a MsrB domain in the interval 2–125; that stretch reads LKKDKSELTD…NSAAIQFIPY (124 aa). The active-site Nucleophile is C114.

This sequence belongs to the MsrB Met sulfoxide reductase family.

The catalysed reaction is L-methionyl-[protein] + [thioredoxin]-disulfide + H2O = L-methionyl-(R)-S-oxide-[protein] + [thioredoxin]-dithiol. This chain is Peptide methionine sulfoxide reductase MsrB, found in Staphylococcus aureus (strain Mu3 / ATCC 700698).